The sequence spans 420 residues: Gamma-glutamyl phosphate reductase (420 aa).

Belongs to the gamma-glutamyl phosphate reductase family.

It localises to the cytoplasm. The catalysed reaction is L-glutamate 5-semialdehyde + phosphate + NADP(+) = L-glutamyl 5-phosphate + NADPH + H(+). It participates in amino-acid biosynthesis; L-proline biosynthesis; L-glutamate 5-semialdehyde from L-glutamate: step 2/2. Catalyzes the NADPH-dependent reduction of L-glutamate 5-phosphate into L-glutamate 5-semialdehyde and phosphate. The product spontaneously undergoes cyclization to form 1-pyrroline-5-carboxylate. In Streptococcus pneumoniae (strain CGSP14), this protein is Gamma-glutamyl phosphate reductase.